Reading from the N-terminus, the 359-residue chain is Oplophorus-luciferin 2-monooxygenase non-catalytic subunit (359 aa).

The first 39 residues, 1 to 39 (MAVNFKFSLLTITIVVNILVYCNASAIKFDVDLEKVPSN), serve as a signal peptide directing secretion. 8 LRR repeats span residues 135 to 158 (AATL…EMSQ), 160 to 180 (TKLN…ALSS), 181 to 203 (DTLA…AFQT), 228 to 251 (SPKL…AIKL), 255 to 278 (GPTT…AVEG), 280 to 300 (QGIL…VWRP), 302 to 325 (LENL…MWLI), and 331 to 356 (LAKI…VFHA).

Heterotetramer of a catalytic 19 kDa and a non-catalytic 35 kDa subunit.

It localises to the secreted. Its function is as follows. Non-catalytic subunit of oplophorus-luciferin 2-monooxygenase. May stabilize the active conformation of the catalytic subunit. The sequence is that of Oplophorus-luciferin 2-monooxygenase non-catalytic subunit from Oplophorus gracilirostris (Luminous shrimp).